Reading from the N-terminus, the 261-residue chain is 1-(5-phosphoribosyl)-5-[(5-phosphoribosylamino)methylideneamino] imidazole-4-carboxamide isomerase (261 aa).

The Proton acceptor role is filled by Asp-8. The Proton donor role is filled by Asp-130.

It belongs to the HisA/HisF family.

Its subcellular location is the cytoplasm. The enzyme catalyses 1-(5-phospho-beta-D-ribosyl)-5-[(5-phospho-beta-D-ribosylamino)methylideneamino]imidazole-4-carboxamide = 5-[(5-phospho-1-deoxy-D-ribulos-1-ylimino)methylamino]-1-(5-phospho-beta-D-ribosyl)imidazole-4-carboxamide. Its pathway is amino-acid biosynthesis; L-histidine biosynthesis; L-histidine from 5-phospho-alpha-D-ribose 1-diphosphate: step 4/9. The polypeptide is 1-(5-phosphoribosyl)-5-[(5-phosphoribosylamino)methylideneamino] imidazole-4-carboxamide isomerase (Prosthecochloris aestuarii (strain DSM 271 / SK 413)).